Reading from the N-terminus, the 107-residue chain is Replication initiation control protein YabA (107 aa).

Residues H81, C83, C97, and C100 each coordinate Zn(2+).

Belongs to the YabA family. Homotetramer. Interacts with both DnaA and DnaN, acting as a bridge between these two proteins. Requires Zn(2+) as cofactor.

It is found in the cytoplasm. It localises to the nucleoid. Functionally, involved in control of chromosome replication initiation. Inhibits the cooperative binding of DnaA to the oriC region, thus negatively regulating initiation of chromosome replication. Inhibits the ability of DnaA-ATP to form a helix on DNA; does not disassemble preformed DnaA-DNA helices. Decreases the residence time of DnaA on the chromosome at its binding sites (oriC, replication forks and promoter-binding sites). Tethers DnaA to the replication machinery via the DNA polymerase beta sliding clamp subunit (dnaN). Associates with oriC and other DnaA targets on the chromosome in a DnaA-dependent manner. The protein is Replication initiation control protein YabA of Streptococcus pyogenes serotype M18 (strain MGAS8232).